We begin with the raw amino-acid sequence, 174 residues long: Peptide deformylase (174 aa).

Fe cation contacts are provided by Cys94 and His136. Glu137 is a catalytic residue. His140 lines the Fe cation pocket.

The protein belongs to the polypeptide deformylase family. Fe(2+) is required as a cofactor.

It catalyses the reaction N-terminal N-formyl-L-methionyl-[peptide] + H2O = N-terminal L-methionyl-[peptide] + formate. Its function is as follows. Removes the formyl group from the N-terminal Met of newly synthesized proteins. Requires at least a dipeptide for an efficient rate of reaction. N-terminal L-methionine is a prerequisite for activity but the enzyme has broad specificity at other positions. The polypeptide is Peptide deformylase (Rhizobium meliloti (strain 1021) (Ensifer meliloti)).